Reading from the N-terminus, the 606-residue chain is NADH-ubiquinone oxidoreductase chain 5 (606 aa).

15 consecutive transmembrane segments (helical) span residues 3 to 23 (VINL…LPIT), 38 to 58 (ITKM…LLFL), 87 to 107 (FFSL…MEFS), 124 to 144 (LLLF…LQLF), 180 to 200 (IGDM…NSWE), 216 to 236 (LLGL…HPWL), 244 to 264 (TPVS…FTLI), 276 to 296 (IQTS…ICAL), 304 to 323 (IIAL…IGIN), 328 to 350 (AFTH…GSII), 369 to 389 (MPIT…MPFL), 404 to 424 (MSYI…MTAS), 460 to 480 (LILG…PHTT), 483 to 503 (MTMP…GFTV), and 586 to 606 (LMKL…LITL).

It belongs to the complex I subunit 5 family. In terms of assembly, core subunit of respiratory chain NADH dehydrogenase (Complex I) which is composed of 45 different subunits.

It is found in the mitochondrion inner membrane. The enzyme catalyses a ubiquinone + NADH + 5 H(+)(in) = a ubiquinol + NAD(+) + 4 H(+)(out). Its function is as follows. Core subunit of the mitochondrial membrane respiratory chain NADH dehydrogenase (Complex I) which catalyzes electron transfer from NADH through the respiratory chain, using ubiquinone as an electron acceptor. Essential for the catalytic activity and assembly of complex I. In Elephas maximus (Indian elephant), this protein is NADH-ubiquinone oxidoreductase chain 5 (MT-ND5).